The following is an 850-amino-acid chain: MCCEKWSHVAEMLLFIEDREEEYKILCLCSRAFVEDRKLYNLGLKGYYVKSSGNNAGDRVTEEEEDDHSSGTTESHSADEGDLDPEAKLMRSMGLPVRFGRMSTHGSFEVSMNARNKAKVRQKRRKHRKQYLDEIVREDWRNDCEEDDLVVSDDPSSVEHCENNSACEIQSKTDAEAENLPVENTLAPKLEVTENWEKYWNEYGEGLLWQSWQEKYPDQTLSSEPWNLPDTKEEWEQHYSQLYWYYLEQFQYWEAQGWTFVASQNCDKDVCTSHTQVDQNAESSLKADGTTLSSSPNTAEDESLGSNDNDHNEIIAGINKITLSAEEVEQSQLDSSEHCDKPLSEVTGKECPASGGSDSCHGTPKESDISENRSSDQPAQELQESSGTNTSKHRPHHNGTDGNESEDDPPDHKPSKMKRSHELDIDENPDSEVDDNGFHLGFKHGSGQKYGGIPNFSRRQVRYLEKNVKYKSKYLDMRKRMTVKNKHIVFSEESGKPFIRKSKVRSKVEKFLKWVNEPVDEEISQEPLSHNKMQDTCTSSDSEEQDMSMEKTDGLMETRDPEPENCQTISSASELEAEKSEGGSLVAAVPENCSTEGVANSPRAEAEVEIKKKKKKKKKNKNKKINGLPPEIASVPELAKYWAQRYRLFSRFDDGIKLDKEGWFSVTPEKIAEHIAGRVSQSFNCDIIVDAFCGVGGNTIQFALTGKRVIAIDIDPVKIDLARNNAEVYGVADKIEFICGDFLLLAPCLKADVVFLSPPWGGPDYATAETFDIRTMMSPDGFEIFRLSQKITNNIVYFLPRNADVDQVASLAGPGGQVEIEQNFLNNKLKTITAYFGDLIRRPALRSAEA.

The segment at 54–85 (NNAGDRVTEEEEDDHSSGTTESHSADEGDLDP) is disordered. Phosphothreonine is present on Thr-61. Phosphoserine occurs at positions 92 and 152. Disordered stretches follow at residues 278–311 (DQNA…DNDH), 327–454 (EVEQ…GGIP), and 523–566 (ISQE…PENC). Over residues 363–374 (TPKESDISENRS) the composition is skewed to basic and acidic residues. Residues 375–390 (SDQPAQELQESSGTNT) are compositionally biased toward polar residues. Phosphoserine is present on residues Ser-405 and Ser-431. Acidic residues predominate over residues 424–435 (DIDENPDSEVDD). The segment covering 548–562 (SMEKTDGLMETRDPE) has biased composition (basic and acidic residues). A Phosphoserine modification is found at Ser-571. The tract at residues 595–628 (TEGVANSPRAEAEVEIKKKKKKKKKNKNKKINGL) is disordered. Positions 611–624 (KKKKKKKKKNKNKK) are enriched in basic residues. Position 713 (Asp-713) interacts with S-adenosyl-L-methionine.

The protein belongs to the methyltransferase superfamily. Trimethylguanosine synthase family. As to quaternary structure, may form homooligomers. Interacts with CREBBP/CBP, EED/WAIT1, EP300/P300, NCOA6/PRIP, PPARBP/PBP and SMN. In terms of tissue distribution, a 55 kDa isoform is widely expressed while a 90 kDa isoform is detected exclusively in brain and testis (at protein level).

It localises to the cytoplasm. It is found in the nucleus. The protein resides in the cajal body. Its subcellular location is the nucleolus. The enzyme catalyses a 5'-end (N(7)-methyl 5'-triphosphoguanosine)-ribonucleoside in snRNA + S-adenosyl-L-methionine = a 5'-end (N(2),N(7)-dimethyl 5'-triphosphoguanosine)-ribonucleoside in snRNA + S-adenosyl-L-homocysteine + H(+). It catalyses the reaction a 5'-end (N(7)-methyl 5'-triphosphoguanosine)-ribonucleoside in snoRNA + S-adenosyl-L-methionine = a 5'-end (N(2),N(7)-dimethyl 5'-triphosphoguanosine)-ribonucleoside in snoRNA + S-adenosyl-L-homocysteine + H(+). The catalysed reaction is a 5'-end (N(2),N(7)-dimethyl 5'-triphosphoguanosine)-ribonucleoside in snRNA + S-adenosyl-L-methionine = a 5'-end (N(2),N(2),N(7)-trimethyl 5'-triphosphoguanosine)-ribonucleoside in snRNA + S-adenosyl-L-homocysteine + H(+). It carries out the reaction a 5'-end (N(2),N(7)-dimethyl 5'-triphosphoguanosine)-ribonucleoside in snoRNA + S-adenosyl-L-methionine = a 5'-end (N(2),N(2),N(7)-trimethyl 5'-triphosphoguanosine)-ribonucleoside in snoRNA + S-adenosyl-L-homocysteine + H(+). In terms of biological role, catalyzes the 2 serial methylation steps for the conversion of the 7-monomethylguanosine (m(7)G) caps of snRNAs and snoRNAs to a 2,2,7-trimethylguanosine (m(2,2,7)G) cap structure. The enzyme is specific for guanine, and N7 methylation must precede N2 methylation. Hypermethylation of the m7G cap of U snRNAs leads to their concentration in nuclear foci, their colocalization with coilin and the formation of canonical Cajal bodies (CBs). Plays a role in transcriptional regulation. The polypeptide is Trimethylguanosine synthase (Rattus norvegicus (Rat)).